The sequence spans 128 residues: Large ribosomal subunit protein bL21 (128 aa).

The disordered stretch occupies residues 104-128; it reads GKKPSVGPRPKRVKAEPAPAADAAE. Low complexity predominate over residues 119–128; that stretch reads EPAPAADAAE.

It belongs to the bacterial ribosomal protein bL21 family. As to quaternary structure, part of the 50S ribosomal subunit. Contacts protein L20.

Functionally, this protein binds to 23S rRNA in the presence of protein L20. The chain is Large ribosomal subunit protein bL21 from Rhodopseudomonas palustris (strain BisB5).